A 551-amino-acid polypeptide reads, in one-letter code: Probable inorganic carbon transporter subunit DabB2 (551 aa).

A run of 14 helical transmembrane segments spans residues 6-26 (SHTT…AAVI), 42-62 (VQWT…SFLF), 65-85 (QQNL…LALS), 86-106 (IQVN…LSVI), 132-152 (GFFL…AIIA), 187-207 (LLLA…FSQI), 217-237 (LSIA…LKSA), 252-272 (PTPV…IIVL), 284-304 (ALLL…LVML), 321-341 (LGFM…LHLV), 374-394 (VVAW…IAAA), 404-424 (MLPA…LKAL), 434-454 (VAAG…EVFI), and 469-489 (PLLD…VAWL).

The protein belongs to the inorganic carbon transporter (TC 9.A.2) DabB family. In terms of assembly, forms a complex with DabA2, possibly a heterodimer.

The protein resides in the cell inner membrane. Its activity is regulated as follows. Uptake of inorganic carbon by cells in the presence of thiosulphate is fully inhibited by the uncouplers carbonyl cyanide m-chlorophenyl hydrazone (CCCP), carbonyl cyanide p-trifluoromethoxyphenyl hydrazone (FCCP), S13 or SF6847. Not inhibited by the ATPase inhibitor N,N-dicyclohexylcarbodiimide (DCCD). Inorganic carbon uptake is inhibited by the ionophore carbonyl cyanide m-chlorophenyl hydrazone (CCCP), suggesting uptake is coupled to a cation gradient. Its function is as follows. Part of an energy-coupled inorganic carbon pump; its substrate may be carbon dioxide. Expression of both dabA2 and dabB2 (DAB2) restores growth in ambient air to E.coli deleted of its carbonic anhydrase genes (called CAfree, deletion of 'can' and 'cynT'); neither dabA2 or dabB2 alone is sufficient. Rescue is pH-independent, suggesting it transports CO(2) and not carbonate ions. Together the genes allow greater than normal uptake of inorganic carbon by E.coli. Uptake of carbon dioxide rather than bicarbonate has been suggested based on kinetic calculations. This chain is Probable inorganic carbon transporter subunit DabB2, found in Halothiobacillus neapolitanus (strain ATCC 23641 / c2) (Thiobacillus neapolitanus).